Here is a 141-residue protein sequence, read N- to C-terminus: Putative pre-16S rRNA nuclease (141 aa).

It belongs to the YqgF nuclease family.

The protein localises to the cytoplasm. Could be a nuclease involved in processing of the 5'-end of pre-16S rRNA. The chain is Putative pre-16S rRNA nuclease from Chlorobium luteolum (strain DSM 273 / BCRC 81028 / 2530) (Pelodictyon luteolum).